A 334-amino-acid polypeptide reads, in one-letter code: Siroheme decarboxylase (334 aa).

Residue His93 is part of the active site.

Belongs to the Ahb/Nir family.

The enzyme catalyses siroheme + 2 H(+) = 12,18-didecarboxysiroheme + 2 CO2. Its pathway is porphyrin-containing compound metabolism. Functionally, involved in heme d1 biosynthesis. Catalyzes the decarboxylation of siroheme into didecarboxysiroheme. Siroheme is probably decarboxylated to monodecarboxysiroheme, which is in turn decarboxylated to didecarboxysiroheme. The polypeptide is Siroheme decarboxylase (Hydrogenobacter thermophilus (strain DSM 6534 / IAM 12695 / TK-6)).